Here is a 213-residue protein sequence, read N- to C-terminus: Thiamine-phosphate synthase (213 aa).

4-amino-2-methyl-5-(diphosphooxymethyl)pyrimidine-binding positions include 38-42 and aspartate 70; that span reads QLREK. Residues aspartate 71 and glutamate 90 each coordinate Mg(2+). Residue serine 109 coordinates 4-amino-2-methyl-5-(diphosphooxymethyl)pyrimidine. 135 to 137 is a 2-[(2R,5Z)-2-carboxy-4-methylthiazol-5(2H)-ylidene]ethyl phosphate binding site; it reads TQT. A 4-amino-2-methyl-5-(diphosphooxymethyl)pyrimidine-binding site is contributed by lysine 138. Residues glycine 165 and 185–186 contribute to the 2-[(2R,5Z)-2-carboxy-4-methylthiazol-5(2H)-ylidene]ethyl phosphate site; that span reads VS.

This sequence belongs to the thiamine-phosphate synthase family. Mg(2+) is required as a cofactor.

The catalysed reaction is 2-[(2R,5Z)-2-carboxy-4-methylthiazol-5(2H)-ylidene]ethyl phosphate + 4-amino-2-methyl-5-(diphosphooxymethyl)pyrimidine + 2 H(+) = thiamine phosphate + CO2 + diphosphate. The enzyme catalyses 2-(2-carboxy-4-methylthiazol-5-yl)ethyl phosphate + 4-amino-2-methyl-5-(diphosphooxymethyl)pyrimidine + 2 H(+) = thiamine phosphate + CO2 + diphosphate. It catalyses the reaction 4-methyl-5-(2-phosphooxyethyl)-thiazole + 4-amino-2-methyl-5-(diphosphooxymethyl)pyrimidine + H(+) = thiamine phosphate + diphosphate. It functions in the pathway cofactor biosynthesis; thiamine diphosphate biosynthesis; thiamine phosphate from 4-amino-2-methyl-5-diphosphomethylpyrimidine and 4-methyl-5-(2-phosphoethyl)-thiazole: step 1/1. Functionally, condenses 4-methyl-5-(beta-hydroxyethyl)thiazole monophosphate (THZ-P) and 2-methyl-4-amino-5-hydroxymethyl pyrimidine pyrophosphate (HMP-PP) to form thiamine monophosphate (TMP). This chain is Thiamine-phosphate synthase, found in Lacticaseibacillus paracasei (strain ATCC 334 / BCRC 17002 / CCUG 31169 / CIP 107868 / KCTC 3260 / NRRL B-441) (Lactobacillus paracasei).